The chain runs to 318 residues: 2-keto-3-deoxygluconate permease (318 aa).

10 helical membrane-spanning segments follow: residues 10–30, 42–62, 82–102, 109–129, 139–159, 163–183, 201–221, 224–244, 257–277, and 289–309; these read LPGG…TLWP, GLIS…GATI, IAVA…GGVS, LSVL…YAAL, AGAV…LILG, LASF…LGFA, TLVP…TIAH, TSGV…LLLA, VAAS…AGMA, and ALVA…TALY.

This sequence belongs to the KdgT transporter family.

The protein resides in the cell inner membrane. The catalysed reaction is 2-dehydro-3-deoxy-D-gluconate(in) + H(+)(in) = 2-dehydro-3-deoxy-D-gluconate(out) + H(+)(out). In terms of biological role, catalyzes the proton-dependent uptake of 2-keto-3-deoxygluconate (KDG) into the cell. The sequence is that of 2-keto-3-deoxygluconate permease from Xanthomonas axonopodis pv. citri (strain 306).